Here is a 313-residue protein sequence, read N- to C-terminus: Protein MFI (313 aa).

In terms of assembly, can homodimerize. Interacts with MFF; the interaction inhibits MFF interaction with DNM1L. Enriched in the pancreatic beta cell and the testis and is expressed at low levels in other tissues tested.

The protein resides in the cytoplasm. It is found in the cytosol. It localises to the mitochondrion outer membrane. Functionally, acts as an inhibitor of mitochondrial fission. Interacts with MFF and prevents DNM1L recruitment to mitochondria, promoting a more fused mitochondrial network. The polypeptide is Protein MFI (Homo sapiens (Human)).